Here is a 308-residue protein sequence, read N- to C-terminus: GTPase Era (308 aa).

Residues arginine 14–proline 181 enclose the Era-type G domain. A G1 region spans residues glycine 22–serine 29. GTP is bound at residue glycine 22 to serine 29. Residues glutamine 48–alanine 52 form a G2 region. The interval aspartate 69–glycine 72 is G3. GTP-binding positions include aspartate 69 to isoleucine 73 and asparagine 131 to aspartate 134. The interval asparagine 131–aspartate 134 is G4. Residues isoleucine 160–alanine 162 form a G5 region. In terms of domain architecture, KH type-2 spans leucine 212 to glutamate 289.

The protein belongs to the TRAFAC class TrmE-Era-EngA-EngB-Septin-like GTPase superfamily. Era GTPase family. Monomer.

The protein localises to the cytoplasm. The protein resides in the cell inner membrane. An essential GTPase that binds both GDP and GTP, with rapid nucleotide exchange. Plays a role in 16S rRNA processing and 30S ribosomal subunit biogenesis and possibly also in cell cycle regulation and energy metabolism. The sequence is that of GTPase Era from Bradyrhizobium sp. (strain BTAi1 / ATCC BAA-1182).